A 277-amino-acid chain; its full sequence is Thiazole synthase (277 aa).

Catalysis depends on lysine 118, which acts as the Schiff-base intermediate with DXP. 1-deoxy-D-xylulose 5-phosphate-binding positions include glycine 179, 205 to 206, and 227 to 228; these read AG and NT.

This sequence belongs to the ThiG family. As to quaternary structure, homotetramer. Forms heterodimers with either ThiH or ThiS.

It is found in the plastid. Its subcellular location is the chloroplast. The catalysed reaction is [ThiS sulfur-carrier protein]-C-terminal-Gly-aminoethanethioate + 2-iminoacetate + 1-deoxy-D-xylulose 5-phosphate = [ThiS sulfur-carrier protein]-C-terminal Gly-Gly + 2-[(2R,5Z)-2-carboxy-4-methylthiazol-5(2H)-ylidene]ethyl phosphate + 2 H2O + H(+). The protein operates within cofactor biosynthesis; thiamine diphosphate biosynthesis. Its function is as follows. Catalyzes the rearrangement of 1-deoxy-D-xylulose 5-phosphate (DXP) to produce the thiazole phosphate moiety of thiamine. Sulfur is provided by the thiocarboxylate moiety of the carrier protein ThiS. In vitro, sulfur can be provided by H(2)S. The chain is Thiazole synthase from Emiliania huxleyi (Coccolithophore).